Here is a 192-residue protein sequence, read N- to C-terminus: MKLLEDRIKKDGQVIGTDVLKVDNFLNHQVDPDLMADLGHEFYRRFSNEPITKILTVESSGIAPAIATAMEFHKPLVFARKHKSLTLKDHLYTATVYSFTKKTSNEIAISRKFLSADDNVLIIDDFLANGQAVEGLMDIIAQAGATLSGVGIVIEKTFQKGRKLLDEKHVRVESLARINAFENGQVIFAPED.

Xanthine contacts are provided by L20 and N27. 128–132 (ANGQA) is a 5-phospho-alpha-D-ribose 1-diphosphate binding site. Xanthine is bound at residue K156.

Belongs to the purine/pyrimidine phosphoribosyltransferase family. Xpt subfamily. In terms of assembly, homodimer.

Its subcellular location is the cytoplasm. It catalyses the reaction XMP + diphosphate = xanthine + 5-phospho-alpha-D-ribose 1-diphosphate. Its pathway is purine metabolism; XMP biosynthesis via salvage pathway; XMP from xanthine: step 1/1. Converts the preformed base xanthine, a product of nucleic acid breakdown, to xanthosine 5'-monophosphate (XMP), so it can be reused for RNA or DNA synthesis. This chain is Xanthine phosphoribosyltransferase, found in Lacticaseibacillus casei (strain BL23) (Lactobacillus casei).